The sequence spans 465 residues: Cytochrome c peroxidase Ccp (465 aa).

Residues 1–6 (MKMVSR) lie on the Cytoplasmic side of the membrane. The helical transmembrane segment at 7 to 27 (ITAIGLAGVAICYLGLSGYVW) threads the bilayer. Residues 28–465 (YHDNKRSKQA…VYTPYMQDKQ (438 aa)) lie on the Periplasmic side of the membrane. Cytochrome c domains follow at residues 42–155 (SAVS…AKQR), 185–287 (QKVA…EKDP), and 337–454 (AQQK…HSLN). Heme c is bound by residues cysteine 59, cysteine 62, histidine 63, methionine 125, cysteine 207, cysteine 210, histidine 211, cysteine 351, cysteine 354, histidine 355, and methionine 429.

The recombinant enzyme lacking its transmembrane domain is a monomer in solution. It depends on heme c as a cofactor.

It localises to the cell inner membrane. With respect to regulation, does not require reductive activation for maximum activity, as peroxidatic heme is high-spin His/OH(-) 6-coordinated. Calcium ions are needed to attain maximum peroxidase activity. In terms of biological role, cytochrome peroxidase that enables anaerobic respiration with H(2)O(2) as a terminal electron acceptor. It receives electrons from the quinol pool. Menaquinol is probably the electron donor in vivo. It can use menadiol (a menaquinol analog), hydroquinone, duroquinol and the artificial electron donor ABTS(2-) in vitro, but only menadiol and hydroquinone can efficiently transfer electrons to Ccp, maintaining the catalytic activity of the enzyme. It enables E.coli to grow on a nonfermentable carbon source when H(2)O(2) is supplied. Plays a role in the peroxide stress response under anaerobic conditions. However, it does not degrade H(2)O(2) quickly enough to lower the periplasmic H(2)O(2) level below that of the surrounding medium and protect the cell from its toxic effects. The chain is Cytochrome c peroxidase Ccp from Escherichia coli (strain K12).